The following is a 204-amino-acid chain: VEL1-related protein AC977.05c (204 aa).

The N-terminal stretch at 1-17 is a signal peptide; that stretch reads MIFKNLISLFFIGLATA.

The protein belongs to the VEL1 family.

Its subcellular location is the cytoplasm. It is found in the cytosol. This chain is VEL1-related protein AC977.05c, found in Schizosaccharomyces pombe (strain 972 / ATCC 24843) (Fission yeast).